The following is a 998-amino-acid chain: Bifunctional glutamine synthetase adenylyltransferase/adenylyl-removing enzyme (998 aa).

The tract at residues 1 to 487 (MVVTKPATQR…LHAKLFYQPL (487 aa)) is adenylyl removase. The adenylyl transferase stretch occupies residues 492-998 (GPAGLEIRHG…KAVVRKVFGS (507 aa)).

This sequence belongs to the GlnE family. Mg(2+) serves as cofactor.

The enzyme catalyses [glutamine synthetase]-O(4)-(5'-adenylyl)-L-tyrosine + phosphate = [glutamine synthetase]-L-tyrosine + ADP. It catalyses the reaction [glutamine synthetase]-L-tyrosine + ATP = [glutamine synthetase]-O(4)-(5'-adenylyl)-L-tyrosine + diphosphate. In terms of biological role, involved in the regulation of glutamine synthetase GlnA, a key enzyme in the process to assimilate ammonia. When cellular nitrogen levels are high, the C-terminal adenylyl transferase (AT) inactivates GlnA by covalent transfer of an adenylyl group from ATP to specific tyrosine residue of GlnA, thus reducing its activity. Conversely, when nitrogen levels are low, the N-terminal adenylyl removase (AR) activates GlnA by removing the adenylyl group by phosphorolysis, increasing its activity. The regulatory region of GlnE binds the signal transduction protein PII (GlnB) which indicates the nitrogen status of the cell. The protein is Bifunctional glutamine synthetase adenylyltransferase/adenylyl-removing enzyme of Mycobacterium avium (strain 104).